We begin with the raw amino-acid sequence, 297 residues long: Formamidopyrimidine-DNA glycosylase (297 aa).

Residue Pro-2 is the Schiff-base intermediate with DNA of the active site. Glu-3 functions as the Proton donor in the catalytic mechanism. The active-site Proton donor; for beta-elimination activity is the Lys-58. DNA-binding residues include His-104, Arg-127, and Lys-170. An FPG-type zinc finger spans residues Asn-261–Arg-297. Arg-287 serves as the catalytic Proton donor; for delta-elimination activity.

This sequence belongs to the FPG family. As to quaternary structure, monomer. The cofactor is Zn(2+).

The catalysed reaction is Hydrolysis of DNA containing ring-opened 7-methylguanine residues, releasing 2,6-diamino-4-hydroxy-5-(N-methyl)formamidopyrimidine.. The enzyme catalyses 2'-deoxyribonucleotide-(2'-deoxyribose 5'-phosphate)-2'-deoxyribonucleotide-DNA = a 3'-end 2'-deoxyribonucleotide-(2,3-dehydro-2,3-deoxyribose 5'-phosphate)-DNA + a 5'-end 5'-phospho-2'-deoxyribonucleoside-DNA + H(+). In terms of biological role, involved in base excision repair of DNA damaged by oxidation or by mutagenic agents. Acts as a DNA glycosylase that recognizes and removes damaged bases. Has a preference for oxidized purines, such as 7,8-dihydro-8-oxoguanine (8-oxoG). Has AP (apurinic/apyrimidinic) lyase activity and introduces nicks in the DNA strand. Cleaves the DNA backbone by beta-delta elimination to generate a single-strand break at the site of the removed base with both 3'- and 5'-phosphates. This is Formamidopyrimidine-DNA glycosylase from Allorhizobium ampelinum (strain ATCC BAA-846 / DSM 112012 / S4) (Agrobacterium vitis (strain S4)).